The sequence spans 131 residues: Profilin-5 (131 aa).

C13 and C115 are oxidised to a cystine. An Involved in PIP2 interaction motif is present at residues 81–97; that stretch reads VVIRGKKGTGGITIKKT. T111 carries the phosphothreonine modification.

It belongs to the profilin family. In terms of assembly, multimer. Occurs in many kinds of cells as a complex with monomeric actin in a 1:1 ratio. Post-translationally, phosphorylated by MAP kinases. In terms of tissue distribution, expressed in vegetative tissues. Present in shoots, roots and coleoptiles. Also detected in endosperm and pollen.

It localises to the cytoplasm. The protein localises to the cytoskeleton. Actin binding is enhanced by calcium Ca(2+). Functionally, binds to actin and affects the structure of the cytoskeleton. At high concentrations, profilin prevents the polymerization of actin, whereas it enhances it at low concentrations. By binding to PIP2, it inhibits the formation of IP3 and DG. Has a high affinity for poly-proline. The protein is Profilin-5 of Zea mays (Maize).